We begin with the raw amino-acid sequence, 625 residues long: Threonine--tRNA ligase (625 aa).

The tract at residues 1 to 149 (MRVLLIHAKR…RNYEAKTTAR (149 aa)) is editing domain. Catalytic stretches follow at residues 197–494 (NPVN…PYIP) and 198–494 (PVNK…PYIP). Cys-291, His-342, and His-463 together coordinate Zn(2+).

This sequence belongs to the class-II aminoacyl-tRNA synthetase family. In terms of assembly, homodimer. The cofactor is Zn(2+).

The protein resides in the cytoplasm. It carries out the reaction tRNA(Thr) + L-threonine + ATP = L-threonyl-tRNA(Thr) + AMP + diphosphate + H(+). In terms of biological role, catalyzes the attachment of threonine to tRNA(Thr) in a two-step reaction: L-threonine is first activated by ATP to form Thr-AMP and then transferred to the acceptor end of tRNA(Thr). Also edits incorrectly charged L-seryl-tRNA(Thr). This chain is Threonine--tRNA ligase, found in Hyperthermus butylicus (strain DSM 5456 / JCM 9403 / PLM1-5).